A 403-amino-acid chain; its full sequence is LIM/homeobox protein Lhx1 (403 aa).

LIM zinc-binding domains lie at 4–54 and 63–117; these read CAGC…CKND and CAGC…CKED. Residues 131 to 147 are compositionally biased toward polar residues; sequence ISVTGSDPSLSPESQDP. Disordered regions lie at residues 131-185 and 318-366; these read ISVT…PRTT and PAGT…SMHS. Basic and acidic residues predominate over residues 150–166; that stretch reads DDAKDSESANVSDKEAG. The homeobox DNA-binding region spans 179–238; that stretch reads RRGPRTTIKAKQLETLKAAFAATPKPTRHIREQLAQETGLNMRVIQVWFQNRRSKERRMK.

As to quaternary structure, interacts with ldb1 via the tandem LIM domains. Both LIM domains are required for optimal binding and binding relieves the inhibitory effect of the LIM domains and activates lhx1. Binding to ldb1 also prevents degradation of ldb1 by rnf12. The stoichiometry of lhx1 and ldb1 is important for their function and an excess of ldb1 can inhibit lhx1 function. Interacts with the N-terminal region of rnf12 by a homeobox-dependent mechanism. In terms of tissue distribution, exhibits a biphasic expression pattern. Initially localized to the Spemann organizer region of gastrulae, leading to expression in prechordal mesoderm and notochord. In the second phase, expressed in the lateral mesoderm and neural plate, eventually concentrating in the pronephros and the CNS. Expressed in the pronephros primordium by late gastrula (stage 12.5) and becomes restricted to the tips of the tubules and ducts as kidney development progresses. In the CNS, becomes progressively recognizable in anatomically distinct structures during larval development. Within the forebrain, shows almost identical expression to lhx5 in the diencephalon, being expressed in alternating stripes to lhx2 and lhx9. Expressed in the diencephalic pretectum within prosomere 1, hypothalamus, ventral thalamus and zona limitans intrathalamica. In the telencephalon, the expression pattern is distinct from lhx5, being localized in the pallium and subpallium. Also expressed in the ventral territories of midbrain (mesencephalon) and hindbrain (rhombencephalon), being expressed in the mesencephalic tegmentum and hindbrain reticular formation. Also shows intense expression in the cerebellum including Purkinje cells.

It localises to the nucleus. Involved in the establishment of the body plan via the Spemann organizer during gastrulation. Transcriptional activator required to induce organizer gene expression downstream of siamois. Promotes head formation by binding to 5'-TAAT'-3' elements in the promoters of head organizer genes cer1 and gsc to stimulate expression. Binds as a complex with siamois and mix-A/mix.1 to the cer1 promoter, and with ldb1 and otx2 to the gsc promoter. Also involved in neural induction via the organizer, including a role in notochord formation. Acts synergistically with ldb1 and ssbp in subsequent axis formation. Involved in kidney development, acting synergistically with pax8 to establish the pronephric primordium in late gastrulae/early neurulae and with pax2 during pronephric morphogenesis in tailbud stages. Has a later role in mediating the activity of inhibitors of ventralization. The chain is LIM/homeobox protein Lhx1 (lhx1) from Xenopus laevis (African clawed frog).